Consider the following 312-residue polypeptide: F-box protein At1g11270 (312 aa).

Residues Ser-29–Met-80 form the F-box domain.

This chain is F-box protein At1g11270, found in Arabidopsis thaliana (Mouse-ear cress).